Here is a 310-residue protein sequence, read N- to C-terminus: MILTLTLNPSVDISYPLDQFNLDTVNRVSQTSKTAGGKGLNVTRVLSEFGEDVIASGFLGGALGQYIEEQIETTRIKQAFFKIKGETRNCIAILHEGQQTEILEKGPTIELKESEEFKSHLLKLFKETDVAVMSGSLPKGLNTDYYTDIVRLAKEQGILTILDSSGQSLEEVLISNEKPTVIKPNIDELSQLLNYKVTNDIKELKAAVSQPIFNDIEWIIVSLGSEGAFAKHNQKFYKVNIPNIKVVNPVGSGDSTVAGIASGLIHQQTDEELLKKANAFGMLNAMEQQTGHINTDKFDEIFKQIEVIEV.

It belongs to the carbohydrate kinase PfkB family. LacC subfamily.

The catalysed reaction is D-tagatofuranose 6-phosphate + ATP = D-tagatofuranose 1,6-bisphosphate + ADP + H(+). It functions in the pathway carbohydrate metabolism; D-tagatose 6-phosphate degradation; D-glyceraldehyde 3-phosphate and glycerone phosphate from D-tagatose 6-phosphate: step 1/2. This chain is Tagatose-6-phosphate kinase, found in Staphylococcus epidermidis (strain ATCC 12228 / FDA PCI 1200).